Here is a 2485-residue protein sequence, read N- to C-terminus: Polyprotein P1234 (2485 aa).

The Alphavirus-like MT domain maps to 28–259 (EAKQVTDNDH…EKRDLLRSWH (232 aa)). A nsP1 membrane-binding region spans residues 244–263 (GSTIYHEKRDLLRSWHLPSV). A lipid anchor (S-palmitoyl cysteine; by host) is attached at cysteine 419. The (+)RNA virus helicase ATP-binding domain occupies 690–841 (ELVDPPFHEF…HEICTQVFHK (152 aa)). 721–728 (GVPGSGKS) is a binding site for a ribonucleoside 5'-triphosphate. The 149-residue stretch at 842–990 (SISRRCTKSV…IEEWQAEHDA (149 aa)) folds into the (+)RNA virus helicase C-terminal domain. The region spanning 1003 to 1322 (DVFQNKANVC…STLTNIYTGS (320 aa)) is the Peptidase C9 domain. The nucleolus localization signal stretch occupies residues 1004–1023 (VFQNKANVCWAKALVPVLKT). Catalysis depends on cysteine 1012, which acts as the For cysteine protease nsP2 activity. A Nuclear export signal motif is present at residues 1056–1065 (VRFFGLDLDS). The active-site For cysteine protease nsP2 activity is histidine 1081. The short motif at 1179-1183 (PGKTV) is the Nuclear localization signal element. In terms of domain architecture, Macro spans 1328–1489 (GCAPSYHVVR…TLKEAVARRE (162 aa)). ADP-D-ribose contacts are provided by aspartate 1339, asparagine 1353, glycine 1361, glycine 1441, isoleucine 1442, and phenylalanine 1443. The Zn(2+) site is built by cysteine 1596, cysteine 1598, cysteine 1621, and cysteine 1639. Residues 1783-1810 (PRTVFRNPPQPAPRTRTPSLAPSRASSR) form a disordered region. Positions 1798–1810 (RTPSLAPSRASSR) are enriched in polar residues. Repeat copies occupy residues 1810–1831 (RISL…ELEA) and 1844–1865 (RTSL…EFEA). Residues 1810 to 1865 (RISLVSNPPGVNRVITREELEALTPSRAPSRSVSRTSLVSNPPGVNRVITREEFEA) are 2 X 21 AA approximate repeats, binding to host FXR family members. Positions 2242–2357 (DCVLETDIAS…KGVKSDKLMA (116 aa)) constitute a RdRp catalytic domain.

As to quaternary structure, interacts with non-structural protein 3. Interacts with RNA-directed RNA polymerase nsP4. Interacts with protease nsP2. interacts with itself. Interacts with mRNA-capping enzyme nsP1. Interacts with host DDX1. Interacts with host DDX3. Interacts (via C-terminus) with host FXR1; this interaction inhibits the formation of host stress granules on viral mRNAs and the nsp3-FXR1 complexes bind viral RNAs and probably orchestrate the assembly of viral replication complexes. Interacts (via C-terminus) with host FXR2; this interaction inhibits the formation of host stress granules on viral mRNAs and the nsp3-FXR2 complexes bind viral RNAs and probably orchestrate the assembly of viral replication complexes. Interacts (via C-terminus) with host FMR1; this interaction inhibits the formation of host stress granules on viral mRNAs and the nsp3-FMR1 complexes bind viral RNAs and probably orchestrate the assembly of viral replication complexes. In terms of assembly, interacts with mRNA-capping enzyme nsP1. Interacts with protease nsP2. interacts with itself. As to quaternary structure, interacts with RNA-directed RNA polymerase nsP4. Interacts with mRNA-capping enzyme nsP1. Interacts with KPNA1/karyopherin-alpha1; this interaction probably allows the active transport of protease nsP2 into the host nucleus. It depends on Mg(2+) as a cofactor. The cofactor is Mn(2+). In terms of processing, specific enzymatic cleavages in vivo yield mature proteins. The processing of the polyprotein is temporally regulated. In early stages (1.7 hpi), P1234 is first cleaved in trans through its nsP2 protease activity, releasing P123' and nsP4, which associate to form the early replication complex. At the same time, P1234 is also cut at the nsP1/nsP2 site early in infection but with lower efficiency. After replication of the viral minus-strand RNAs (4 hpi), the polyproteins are cut at the nsP1/nsP2 and nsP2/nsP3 sites very efficiently, preventing accumulation of P123' and P1234 and allowing the formation of the late replication complex. NsP3'/nsP4 site is not cleaved anymore and P34 is produced rather than nsP4. Specific enzymatic cleavages in vivo yield mature proteins. The processing of the polyprotein is temporally regulated. In early stages (1.7 hpi), P123 is cleaved at the nsP1/nsP2 site with low efficiency. After replication of the viral minus-strand RNAs (4 hpi), the polyproteins are cut at the nsP1/nsP2 and nsP2/nsP3 sites very efficiently, preventing accumulation of P123 and allowing the formation of the late replication complex. Post-translationally, specific enzymatic cleavages in vivo yield mature proteins. The processing of the polyprotein is temporally regulated. In early stages (1.7 hpi), P123' is cleaved at the nsP1/nsP2 site with low efficiency. After replication of the viral minus-strand RNAs (4 hpi), the polyproteins are cut at the nsP1/nsP2 and nsP2/nsP3 sites very efficiently, preventing accumulation of P123' and allowing the formation of the late replication complex. In terms of processing, palmitoylated by host palmitoyltransferases ZDHHC2 and ZDHHC19. Phosphorylated by host on serines and threonines. Post-translationally, ubiquitinated; targets the protein for rapid degradation via the ubiquitin system. Nsp4 is present in extremely low quantities due to low frequency of translation through the amber stop-codon and the degradation by the ubiquitin pathway.

It is found in the host cytoplasmic vesicle membrane. It localises to the host cell membrane. The protein localises to the host cell projection. Its subcellular location is the host filopodium. The protein resides in the host nucleus. It is found in the host cytoplasm. It carries out the reaction GTP + S-adenosyl-L-methionine = N(7)-methyl-GTP + S-adenosyl-L-homocysteine. It catalyses the reaction N(7)-methyl-GTP + L-histidyl-[protein] = N(tele)-(N(7)-methylguanosine 5'-phospho)-L-histidyl-[protein] + diphosphate. The enzyme catalyses N(tele)-(N(7)-methylguanosine 5'-phospho)-L-histidyl-[protein] + a 5'-end diphospho-(purine-ribonucleoside) in mRNA + H(+) = a 5'-end (N(7)-methyl 5'-triphosphoguanosine)-(purine-ribonucleoside) in mRNA + L-histidyl-[protein]. The catalysed reaction is a 5'-end triphospho-ribonucleoside in mRNA + H2O = a 5'-end diphospho-ribonucleoside in mRNA + phosphate + H(+). It carries out the reaction a ribonucleoside 5'-triphosphate + H2O = a ribonucleoside 5'-diphosphate + phosphate + H(+). It catalyses the reaction ATP + H2O = ADP + phosphate + H(+). The enzyme catalyses RNA(n) + a ribonucleoside 5'-triphosphate = RNA(n+1) + diphosphate. The catalysed reaction is 4-O-(ADP-D-ribosyl)-L-aspartyl-[protein] + H2O = L-aspartyl-[protein] + ADP-D-ribose + H(+). It carries out the reaction 5-O-(ADP-D-ribosyl)-L-glutamyl-[protein] + H2O = L-glutamyl-[protein] + ADP-D-ribose + H(+). It catalyses the reaction RNA(n) + ATP = RNA(n)-3'-adenine ribonucleotide + diphosphate. The enzyme catalyses ADP-alpha-D-ribose 1''-phosphate + H2O = ADP-D-ribose + phosphate. Inhibited by sinefungin. Functionally, inactive precursor of the viral replicase, which is activated by cleavages carried out by the viral protease nsP2. Its function is as follows. The early replication complex formed by the polyprotein P123 and nsP4 synthesizes the minus-strand RNAs (antigenome). Polyprotein P123 is a short-lived polyprotein that accumulates during early stage of infection. As soon P123 is cleaved into mature proteins, the plus-strand RNAs synthesis begins. In terms of biological role, the early replication complex formed by the polyprotein P123' and nsP4 synthesizes minus-strand RNAs (antigenome). Polyprotein P123' is a short-lived polyprotein that accumulates during early stage of infection. As soon P123' is cleaved into mature proteins, the plus-strand RNAs synthesis begins. Cytoplasmic capping enzyme that catalyzes two virus-specific reactions: methyltransferase and nsP1 guanylyltransferase. mRNA-capping is necessary since all viral RNAs are synthesized in the cytoplasm, and host capping enzymes are restricted to the nucleus. The enzymatic reaction involves a covalent link between 7-methyl-GMP and nsP1, whereas eukaryotic capping enzymes form a covalent complex only with GMP. NsP1 capping consists in the following reactions: GTP is first methylated into 7-methyl-GMP and then is covalently linked to nsP1 to form the m7GMp-nsP1 complex from which 7-methyl-GMP complex is transferred to the mRNA to create the cap structure. NsP1 is also needed for the initiation of the minus-strand RNAs synthesis. Probably serves as a membrane anchor for the replication complex composed of nsP1-nsP4. Nsp1 is needed for the initiation of the minus-strand RNAs synthesis. Palmitoylated nsP1 is remodeling host cell cytoskeleton, and induces filopodium-like structure formation at the surface of the host cell. Functionally, multifunctional protein whose N-terminus is part of the RNA polymerase complex and displays NTPase, RNA triphosphatase and helicase activities. NTPase and RNA triphosphatase are involved in viral RNA capping and helicase keeps a check on the dsRNA replication intermediates. The C-terminus harbors a protease that specifically cleaves the polyproteins and releases the mature proteins. Required for the shutoff of minus-strand RNAs synthesis. Inhibits host translation to ensure maximal viral gene expression and evade host immune response. Its function is as follows. Seems to be essential for minus-strand RNAs and subgenomic 26S mRNAs synthesis. Displays mono-ADP-ribosylhydrolase activity. ADP-ribosylation is a post-translational modification that controls various processes of the host cell and the virus probably needs to revert it for optimal viral replication. Binds proteins of FXR family and sequesters them into the viral RNA replication complexes thereby inhibiting the formation of host stress granules on viral mRNAs. The nsp3-FXR complexes bind viral RNAs and probably orchestrate the assembly of viral replication complexes, thanks to the ability of FXR family members to self-assemble and bind DNA. In terms of biological role, seems to be essential for minus-strand RNAs and subgenomic 26S mRNAs synthesis. Displays mono-ADP-ribosylhydrolase activity. ADP-ribosylation is a post-translational modification that controls various processes of the host cell and the virus probably needs to revert it for optimal viral replication. Binds proteins of FXR family and sequesters them into the viral RNA replication complexes thereby inhibiting the formation of host stress granules on viral mRNAs. The nsp3'-FXR complexes bind viral RNAs and probably orchestrate the assembly of viral replication complexes, thanks to the ability of FXR family members to self-assemble and bind DNA. RNA dependent RNA polymerase. Replicates genomic and antigenomic RNA by recognizing replications specific signals. The early replication complex formed by the polyprotein P123 and nsP4 synthesizes minus-strand RNAs. The late replication complex composed of fully processed nsP1-nsP4 is responsible for the production of genomic and subgenomic plus-strand RNAs. The protein is Polyprotein P1234 of Venezuelan equine encephalitis virus (strain 3880) (VEEV).